Reading from the N-terminus, the 228-residue chain is UPF0173 metal-dependent hydrolase Lm4b_01588 (228 aa).

It belongs to the UPF0173 family.

The chain is UPF0173 metal-dependent hydrolase Lm4b_01588 from Listeria monocytogenes serotype 4b (strain CLIP80459).